The chain runs to 343 residues: Ubiquitin thioesterase OTU1 (343 aa).

Residues 45–123 form a UBX-like region; it reads RCKAKGGTHV…IVEEDQTRPK (79 aa). One can recognise an OTU domain in the interval 144-269; the sequence is LTRTAVPADN…GIHYDPLQRN (126 aa). The segment at 149-155 is cys-loop; sequence VPADNSC. The active site involves D152. C155 serves as the catalytic Nucleophile. Residues 208 to 218 form a variable-loop region; sequence IRRDDTWGGAI. Positions 258–262 are his-loop; it reads YDGIH. Position 261 (I261) interacts with substrate. Residue H262 is part of the active site. Positions 286-291 are S2 site; sequence DIVLVQ. The C2H2-type zinc finger occupies 313-337; it reads LRCMLCQKGLTGQAEARDHARETGH. H337 is a catalytic residue.

In terms of assembly, interacts with VCP; the interaction is direct. Interacts with FAF2/UBXD8. Interacts with DERL1; however interaction is dependent on the UBAX-like region, suggesting that it may be indirect. Interacts with PLAA, UBXN6 and VCP; may form a complex involved in macroautophagy.

The protein localises to the cytoplasm. The enzyme catalyses Thiol-dependent hydrolysis of ester, thioester, amide, peptide and isopeptide bonds formed by the C-terminal Gly of ubiquitin (a 76-residue protein attached to proteins as an intracellular targeting signal).. Its function is as follows. Hydrolase that can remove conjugated ubiquitin from proteins and participates in endoplasmic reticulum-associated degradation (ERAD) for misfolded lumenal proteins. May act by triming the ubiquitin chain on the associated substrate to facilitate their threading through the VCP/p97 pore. Ubiquitin moieties on substrates may present a steric impediment to the threading process when the substrate is transferred to the VCP pore and threaded through VCP's axial channel. Mediates deubiquitination of 'Lys-27'-, 'Lys-29'- and 'Lys-33'-linked polyubiquitin chains. Also able to hydrolyze 'Lys-11'-linked ubiquitin chains. Cleaves both polyubiquitin and di-ubiquitin. May play a role in macroautophagy, regulating for instance the clearance of damaged lysosomes. May recruit PLAA, UBXN6 and VCP to damaged lysosome membranes decorated with K48-linked ubiquitin chains and remove these chains allowing autophagosome formation. The sequence is that of Ubiquitin thioesterase OTU1 (Yod1) from Rattus norvegicus (Rat).